Reading from the N-terminus, the 265-residue chain is Polyglutamine-binding protein 1 (265 aa).

Positions 46–80 constitute a WW domain; that stretch reads EGLPPSWYKVFDPSCGLPYYWNADTDLVSWLSPHD. At serine 94 the chain carries Phosphoserine. The disordered stretch occupies residues 94 to 265; sequence SSNADAEEKL…AEASRTKQQD (172 aa). Residues 99–175 are compositionally biased toward basic and acidic residues; sequence AEEKLDRSHD…DKADREEGKE (77 aa). Tandem repeats lie at residues 104–110, 111–117, 118–124, 125–131, 132–138, 139–140, 141–142, 143–144, 150–151, 152–153, 154–155, 156–157, 158–159, 160–161, and 162–163. Positions 104–138 are 5 X 7 AA approximate tandem repeats of D-R-[SG]-H-D-K-S; the sequence is DRSHDKSDRGHDKSDRSHEKPDRGHDKSDRGHDKS. The interval 139–144 is 3 X 2 AA tandem repeats of [DE]-R; it reads DRDRER. Residues 150 to 163 form a 7 X 2 AA tandem repeats of [DE]-R region; the sequence is DRERERDRERDRDR. The important for interaction with TXNL4A stretch occupies residues 245-255; the sequence is YPSPGAVLRAN. Serine 247 is modified (phosphoserine).

Interacts with POU3F2/Brn-2, ATXN1, TXNL4A, HTT and AR. Interaction with ATXN1 correlates positively with the length of the polyglutamine tract. Interacts with RNA polymerase II large subunit in a phosphorylation-dependent manner. Forms a ternary complex with ATXN1 mutant and phosphorylated RNA polymerase II. Interacts (via C-terminus) with TXNL4A and CD2BP2. Interacts (via WW domain) with ATN1 and SF3B1, and may interact with additional splice factors. Interacts (via WW domain) with WBP11; Leading to reduce interaction between PQBP1 and TXNL4A. Interacts with CAPRIN1. Interacts with DDX1. Interacts with SFPQ. Interacts with KHSRP.

It is found in the nucleus. The protein localises to the nucleus speckle. Its subcellular location is the cytoplasmic granule. Intrinsically disordered protein that acts as a scaffold, and which is involved in different processes, such as pre-mRNA splicing, transcription regulation, innate immunity and neuron development. Interacts with splicing-related factors via the intrinsically disordered region and regulates alternative splicing of target pre-mRNA species. May suppress the ability of POU3F2 to transactivate the DRD1 gene in a POU3F2 dependent manner. Can activate transcription directly or via association with the transcription machinery. May be involved in ATXN1 mutant-induced cell death. The interaction with ATXN1 mutant reduces levels of phosphorylated RNA polymerase II large subunit. Involved in the assembly of cytoplasmic stress granule, possibly by participating in the transport of neuronal RNA granules. Also acts as an innate immune sensor of infection by retroviruses, by detecting the presence of reverse-transcribed DNA in the cytosol. Directly binds retroviral reverse-transcribed DNA in the cytosol and interacts with CGAS, leading to activate the cGAS-STING signaling pathway, triggering type-I interferon production. In Pongo pygmaeus (Bornean orangutan), this protein is Polyglutamine-binding protein 1 (PQBP1).